Consider the following 794-residue polypeptide: Lon protease (794 aa).

A Lon N-terminal domain is found at 29-222; the sequence is VPLLPLRGVL…TLISIIQDEQ (194 aa). 374-381 lines the ATP pocket; sequence GPPGVGKT. The Lon proteolytic domain maps to 610–791; the sequence is TDQVGMATGL…DEVLEHALVG (182 aa). Residues S697 and K740 contribute to the active site.

The protein belongs to the peptidase S16 family. As to quaternary structure, homohexamer. Organized in a ring with a central cavity.

The protein resides in the cytoplasm. The catalysed reaction is Hydrolysis of proteins in presence of ATP.. Functionally, ATP-dependent serine protease that mediates the selective degradation of mutant and abnormal proteins as well as certain short-lived regulatory proteins. Required for cellular homeostasis and for survival from DNA damage and developmental changes induced by stress. Degrades polypeptides processively to yield small peptide fragments that are 5 to 10 amino acids long. Binds to DNA in a double-stranded, site-specific manner. The polypeptide is Lon protease (Bacillus thuringiensis (strain Al Hakam)).